A 74-amino-acid chain; its full sequence is ATP synthase subunit 9, mitochondrial (74 aa).

A run of 2 helical transmembrane segments spans residues 8-28 (IGAG…GLIF) and 50-70 (ILGF…AFLI).

This sequence belongs to the ATPase C chain family. F-type ATPases have 2 components, CF(1) - the catalytic core - and CF(0) - the membrane proton channel. CF(1) has five subunits: alpha(3), beta(3), gamma(1), delta(1), epsilon(1). CF(0) has three main subunits: a, b and c.

It is found in the mitochondrion membrane. Its function is as follows. Mitochondrial membrane ATP synthase (F(1)F(0) ATP synthase or Complex V) produces ATP from ADP in the presence of a proton gradient across the membrane which is generated by electron transport complexes of the respiratory chain. F-type ATPases consist of two structural domains, F(1) - containing the extramembraneous catalytic core and F(0) - containing the membrane proton channel, linked together by a central stalk and a peripheral stalk. During catalysis, ATP synthesis in the catalytic domain of F(1) is coupled via a rotary mechanism of the central stalk subunits to proton translocation. Part of the complex F(0) domain. A homomeric c-ring of probably 10 subunits is part of the complex rotary element. The chain is ATP synthase subunit 9, mitochondrial (atp9) from Schizosaccharomyces pombe (strain 972 / ATCC 24843) (Fission yeast).